The primary structure comprises 491 residues: UDP-N-acetylmuramate--L-alanine ligase (491 aa).

Position 126-132 (126-132 (GTHGKTT)) interacts with ATP.

It belongs to the MurCDEF family.

The protein localises to the cytoplasm. It carries out the reaction UDP-N-acetyl-alpha-D-muramate + L-alanine + ATP = UDP-N-acetyl-alpha-D-muramoyl-L-alanine + ADP + phosphate + H(+). It participates in cell wall biogenesis; peptidoglycan biosynthesis. In terms of biological role, cell wall formation. The polypeptide is UDP-N-acetylmuramate--L-alanine ligase (Yersinia pestis (strain Pestoides F)).